The chain runs to 1019 residues: Probable LRR receptor-like serine/threonine-protein kinase At1g29720 (1019 aa).

An N-terminal signal peptide occupies residues 1–19; the sequence is MSIILWSFFLFFTIILSSL. Over 20 to 615 the chain is Extracellular; the sequence is TNITTLASFS…EKTKHHIKYP (596 aa). Asn-21, Asn-79, and Asn-90 each carry an N-linked (GlcNAc...) asparagine glycan. 13 LRR repeats span residues 93-117, 118-141, 143-165, 166-189, 190-212, 214-236, 237-261, 263-283, 284-307, 308-330, 332-351, 352-374, and 375-398; these read ICRI…LTKL, PYLK…WAKM, YLTS…LQNF, KNLT…LGNL, TSLT…TLAR, VNLE…YIGN, WTRL…VVRL, NLLE…NLSS, KGLK…IWNL, TDLK…VQNP, KNIY…GGLL, NSQS…QKGS, and TINT…AVPA. N-linked (GlcNAc...) asparagine glycans are attached at residues Asn-153, Asn-167, and Asn-188. N-linked (GlcNAc...) asparagine glycans are attached at residues Asn-225 and Asn-236. N-linked (GlcNAc...) asparagine glycosylation is found at Asn-280 and Asn-306. 4 N-linked (GlcNAc...) asparagine glycosylation sites follow: Asn-363, Asn-387, Asn-469, and Asn-558. A helical transmembrane segment spans residues 616–636; it reads LILGASGALVTIVLLAVGIYA. The Cytoplasmic portion of the chain corresponds to 637–1019; it reads RGIYRRDNNR…STVENSSSSL (383 aa). Residues 673–946 enclose the Protein kinase domain; sequence FDQANKLGEG…EAVKMLEGEI (274 aa). ATP is bound by residues 679–687 and Lys-701; that span reads LGEGGFGSV. Tyr-746 is modified (phosphotyrosine). Asp-797 functions as the Proton acceptor in the catalytic mechanism. Ser-830 bears the Phosphoserine mark. A phosphothreonine mark is found at Thr-831 and Thr-836. Residue Tyr-844 is modified to Phosphotyrosine.

It belongs to the protein kinase superfamily. Ser/Thr protein kinase family.

It is found in the cell membrane. The catalysed reaction is L-seryl-[protein] + ATP = O-phospho-L-seryl-[protein] + ADP + H(+). It catalyses the reaction L-threonyl-[protein] + ATP = O-phospho-L-threonyl-[protein] + ADP + H(+). The sequence is that of Probable LRR receptor-like serine/threonine-protein kinase At1g29720 (RFK1) from Arabidopsis thaliana (Mouse-ear cress).